A 219-amino-acid polypeptide reads, in one-letter code: Transmembrane protein 125 (219 aa).

4 helical membrane passes run 36–56, 68–88, 114–134, and 147–167; these read LCFV…VALL, LATG…QLMS, ALVV…LAGL, and MLSV…GLLL.

The protein resides in the membrane. This chain is Transmembrane protein 125 (TMEM125), found in Homo sapiens (Human).